The following is a 279-amino-acid chain: Elongation factor Ts (279 aa).

The interval 80-83 is involved in Mg(2+) ion dislocation from EF-Tu; it reads TDFV.

This sequence belongs to the EF-Ts family.

The protein localises to the cytoplasm. Functionally, associates with the EF-Tu.GDP complex and induces the exchange of GDP to GTP. It remains bound to the aminoacyl-tRNA.EF-Tu.GTP complex up to the GTP hydrolysis stage on the ribosome. The chain is Elongation factor Ts from Borrelia garinii subsp. bavariensis (strain ATCC BAA-2496 / DSM 23469 / PBi) (Borreliella bavariensis).